Here is a 426-residue protein sequence, read N- to C-terminus: Glutamate-1-semialdehyde 2,1-aminomutase (426 aa).

An N6-(pyridoxal phosphate)lysine modification is found at lysine 265.

Belongs to the class-III pyridoxal-phosphate-dependent aminotransferase family. HemL subfamily. As to quaternary structure, homodimer. Pyridoxal 5'-phosphate serves as cofactor.

Its subcellular location is the cytoplasm. The catalysed reaction is (S)-4-amino-5-oxopentanoate = 5-aminolevulinate. It functions in the pathway porphyrin-containing compound metabolism; protoporphyrin-IX biosynthesis; 5-aminolevulinate from L-glutamyl-tRNA(Glu): step 2/2. The polypeptide is Glutamate-1-semialdehyde 2,1-aminomutase (Klebsiella pneumoniae (strain 342)).